The primary structure comprises 387 residues: 17-beta-hydroxysteroid dehydrogenase type 2 (387 aa).

The chain crosses the membrane as a helical; Signal-anchor for type II membrane protein span at residues 4–24 (FFSDTAWICLAVPTVLCGTVF). An NAD(+)-binding site is contributed by 82 to 111 (QKAVLVTGGDCGLGHALCKYLDELGFTVFA). Ser219 contacts substrate. Tyr232 is a catalytic residue.

The protein belongs to the short-chain dehydrogenases/reductases (SDR) family. Homodimer. In terms of tissue distribution, expressed in placenta.

The protein resides in the endoplasmic reticulum membrane. It catalyses the reaction 17beta-estradiol + NAD(+) = estrone + NADH + H(+). The catalysed reaction is testosterone + NAD(+) = androst-4-ene-3,17-dione + NADH + H(+). It carries out the reaction 17beta-hydroxy-5alpha-androstan-3-one + NAD(+) = 5alpha-androstan-3,17-dione + NADH + H(+). The enzyme catalyses (20S)-hydroxypregn-4-en-3-one + NAD(+) = progesterone + NADH + H(+). Functionally, catalyzes the NAD-dependent oxidation of the highly active 17beta-hydroxysteroids, such as estradiol (E2), testosterone (T), and dihydrotestosterone (DHT), to their less active forms and thus regulates the biological potency of these steroids. Oxidizes estradiol to estrone, testosterone to androstenedione, and dihydrotestosterone to 5alpha-androstan-3,17-dione. Also has 20-alpha-HSD activity. The chain is 17-beta-hydroxysteroid dehydrogenase type 2 from Homo sapiens (Human).